Here is a 154-residue protein sequence, read N- to C-terminus: Ribonuclease H (154 aa).

In terms of domain architecture, RNase H type-1 spans methionine 1–leucine 142. Positions 10, 48, 70, and 134 each coordinate Mg(2+).

Belongs to the RNase H family. Monomer. Requires Mg(2+) as cofactor.

The protein localises to the cytoplasm. The catalysed reaction is Endonucleolytic cleavage to 5'-phosphomonoester.. In terms of biological role, endonuclease that specifically degrades the RNA of RNA-DNA hybrids. The chain is Ribonuclease H from Tolumonas auensis (strain DSM 9187 / NBRC 110442 / TA 4).